Here is a 155-residue protein sequence, read N- to C-terminus: Deoxyuridine 5'-triphosphate nucleotidohydrolase (155 aa).

Substrate is bound by residues 74 to 76 (RSG), asparagine 87, and 91 to 93 (LID).

The protein belongs to the dUTPase family. Mg(2+) serves as cofactor.

It catalyses the reaction dUTP + H2O = dUMP + diphosphate + H(+). The protein operates within pyrimidine metabolism; dUMP biosynthesis; dUMP from dCTP (dUTP route): step 2/2. Its function is as follows. This enzyme is involved in nucleotide metabolism: it produces dUMP, the immediate precursor of thymidine nucleotides and it decreases the intracellular concentration of dUTP so that uracil cannot be incorporated into DNA. The protein is Deoxyuridine 5'-triphosphate nucleotidohydrolase of Xanthomonas oryzae pv. oryzae (strain PXO99A).